We begin with the raw amino-acid sequence, 533 residues long: Na(+)/H(+) antiporter NhaB (533 aa).

11 consecutive transmembrane segments (helical) span residues 10–30, 67–87, 96–116, 131–165, 209–229, 247–267, 310–330, 355–375, 396–416, 454–474, and 485–505; these read IGNF…SFLI, PGGL…SQVL, VLLL…LLLF, VSLL…FYSI, LLMH…VGEP, IRMS…CYIV, AFIG…VGLI, EEAL…AVII, LVIF…VFVG, ATPN…APLI, and ALPY…IGFL.

It belongs to the NhaB Na(+)/H(+) (TC 2.A.34) antiporter family.

It localises to the cell inner membrane. It carries out the reaction 2 Na(+)(in) + 3 H(+)(out) = 2 Na(+)(out) + 3 H(+)(in). Its function is as follows. Na(+)/H(+) antiporter that extrudes sodium in exchange for external protons. This is Na(+)/H(+) antiporter NhaB from Shewanella oneidensis (strain ATCC 700550 / JCM 31522 / CIP 106686 / LMG 19005 / NCIMB 14063 / MR-1).